Reading from the N-terminus, the 152-residue chain is Transcriptional regulator MraZ (152 aa).

2 SpoVT-AbrB domains span residues 5–52 (ASAI…PLDE) and 81–124 (AHEC…DEAA).

It belongs to the MraZ family. As to quaternary structure, forms oligomers.

Its subcellular location is the cytoplasm. It localises to the nucleoid. In Shewanella violacea (strain JCM 10179 / CIP 106290 / LMG 19151 / DSS12), this protein is Transcriptional regulator MraZ.